The sequence spans 487 residues: Protein nucleotidyltransferase YdiU (487 aa).

G90, G92, R93, K113, D125, G126, R176, and R183 together coordinate ATP. The active-site Proton acceptor is the D252. Positions 253 and 262 each coordinate Mg(2+). D262 contributes to the ATP binding site.

It belongs to the SELO family. It depends on Mg(2+) as a cofactor. The cofactor is Mn(2+).

It carries out the reaction L-seryl-[protein] + ATP = 3-O-(5'-adenylyl)-L-seryl-[protein] + diphosphate. It catalyses the reaction L-threonyl-[protein] + ATP = 3-O-(5'-adenylyl)-L-threonyl-[protein] + diphosphate. The enzyme catalyses L-tyrosyl-[protein] + ATP = O-(5'-adenylyl)-L-tyrosyl-[protein] + diphosphate. The catalysed reaction is L-histidyl-[protein] + UTP = N(tele)-(5'-uridylyl)-L-histidyl-[protein] + diphosphate. It carries out the reaction L-seryl-[protein] + UTP = O-(5'-uridylyl)-L-seryl-[protein] + diphosphate. It catalyses the reaction L-tyrosyl-[protein] + UTP = O-(5'-uridylyl)-L-tyrosyl-[protein] + diphosphate. Nucleotidyltransferase involved in the post-translational modification of proteins. It can catalyze the addition of adenosine monophosphate (AMP) or uridine monophosphate (UMP) to a protein, resulting in modifications known as AMPylation and UMPylation. The chain is Protein nucleotidyltransferase YdiU from Ectopseudomonas mendocina (strain ymp) (Pseudomonas mendocina).